We begin with the raw amino-acid sequence, 492 residues long: Malonyl-CoA decarboxylase, mitochondrial (492 aa).

The N-terminal 38 residues, 1 to 38 (MRGLGPSLRARRLLPLRYPPRPPGPRGPRLCSGLTASA), are a transit peptide targeting the mitochondrion. The tract at residues 39–189 (MDELLRRAVP…VLKSMLSEWF (151 aa)) is alpha-helical domain. K58 is modified (N6-acetyllysine). Residue K167 is modified to N6-acetyllysine; alternate. K167 carries the post-translational modification N6-succinyllysine; alternate. The tract at residues 190–492 (SSGFLNLERV…VAQFQSNSKL (303 aa)) is catalytic domain. K210 is modified (N6-acetyllysine). K221 is modified (N6-succinyllysine). 298–304 (QGVELGT) lines the malonyl-CoA pocket. K316 is subject to N6-acetyllysine. A malonyl-CoA-binding site is contributed by S328. S328 (proton acceptor) is an active-site residue. An N6-acetyllysine; alternate modification is found at K385. K385 bears the N6-succinyllysine; alternate mark. K388 is subject to N6-acetyllysine. H422 is a malonyl-CoA binding site. Residue H422 is the Proton donor of the active site. K441 and K471 each carry N6-acetyllysine. The Microbody targeting signal motif lies at 490–492 (SKL).

In terms of assembly, homotetramer. Dimer of dimers. The two subunits within a dimer display conformational differences suggesting that at any given moment, only one of the two subunits is competent for malonyl-CoA binding and catalytic activity. Under oxidizing conditions, can form disulfide-linked homotetramers (in vitro). Associates with the peroxisomal targeting signal receptor PEX5. Post-translationally, acetylation at Lys-471 activates malonyl-CoA decarboxylase activity. Deacetylation at Lys-471 by SIRT4 represses activity, leading to promote lipogenesis. Interchain disulfide bonds may form in peroxisomes (Potential). Interchain disulfide bonds are not expected to form in the reducing environment of the cytoplasm and mitochondria. As to expression, expressed in liver, heart, skeletal muscles and adipose tissues (at protein level). Ubiquitous. Strongly expressed in liver, kidney, heart, skeletal muscle and adipose tissues. Weakly expressed in brain.

It localises to the cytoplasm. Its subcellular location is the mitochondrion matrix. The protein resides in the peroxisome. It is found in the peroxisome matrix. It catalyses the reaction malonyl-CoA + H(+) = acetyl-CoA + CO2. The protein operates within metabolic intermediate biosynthesis; acetyl-CoA biosynthesis; acetyl-CoA from malonyl-CoA: step 1/1. Its activity is regulated as follows. Malonyl-CoA decarboxylase activity does not require any cofactors or divalent metal ions. Its function is as follows. Catalyzes the conversion of malonyl-CoA to acetyl-CoA. In the fatty acid biosynthesis MCD selectively removes malonyl-CoA and thus assures that methyl-malonyl-CoA is the only chain elongating substrate for fatty acid synthase and that fatty acids with multiple methyl side chains are produced. In peroxisomes it may be involved in degrading intraperoxisomal malonyl-CoA, which is generated by the peroxisomal beta-oxidation of odd chain-length dicarboxylic fatty acids. Plays a role in the metabolic balance between glucose and lipid oxidation in muscle independent of alterations in insulin signaling. May play a role in controlling the extent of ischemic injury by promoting glucose oxidation. The protein is Malonyl-CoA decarboxylase, mitochondrial of Rattus norvegicus (Rat).